Reading from the N-terminus, the 31-residue chain is Photosystem II reaction center protein T (31 aa).

The helical transmembrane segment at 3 to 23 threads the bilayer; sequence ALVYVFLLTGTLMVIFFAIFF.

The protein belongs to the PsbT family. In terms of assembly, PSII is composed of 1 copy each of membrane proteins PsbA, PsbB, PsbC, PsbD, PsbE, PsbF, PsbH, PsbI, PsbJ, PsbK, PsbL, PsbM, PsbT, PsbX, PsbY, PsbZ, Psb30/Ycf12, at least 3 peripheral proteins of the oxygen-evolving complex and a large number of cofactors. It forms dimeric complexes.

The protein localises to the plastid. It is found in the chloroplast thylakoid membrane. Functionally, found at the monomer-monomer interface of the photosystem II (PS II) dimer, plays a role in assembly and dimerization of PSII. PSII is a light-driven water plastoquinone oxidoreductase, using light energy to abstract electrons from H(2)O, generating a proton gradient subsequently used for ATP formation. The polypeptide is Photosystem II reaction center protein T (Pyropia yezoensis (Susabi-nori)).